A 325-amino-acid polypeptide reads, in one-letter code: Phospho-N-acetylmuramoyl-pentapeptide-transferase (325 aa).

Transmembrane regions (helical) follow at residues 7–27, 57–77, 81–101, 122–142, 146–166, 186–206, 227–247, 252–272, and 302–322; these read LFVL…FIPF, IVIV…ITGF, LLLL…DDYL, VIAA…FIAI, TFGF…LLGA, IAFG…TALF, VFMG…IAIL, LMLI…IIQV, and VVVT…YIGV.

The protein belongs to the glycosyltransferase 4 family. MraY subfamily. Mg(2+) serves as cofactor.

The protein localises to the cell membrane. The catalysed reaction is UDP-N-acetyl-alpha-D-muramoyl-L-alanyl-gamma-D-glutamyl-meso-2,6-diaminopimeloyl-D-alanyl-D-alanine + di-trans,octa-cis-undecaprenyl phosphate = di-trans,octa-cis-undecaprenyl diphospho-N-acetyl-alpha-D-muramoyl-L-alanyl-D-glutamyl-meso-2,6-diaminopimeloyl-D-alanyl-D-alanine + UMP. The protein operates within cell wall biogenesis; peptidoglycan biosynthesis. In terms of biological role, catalyzes the initial step of the lipid cycle reactions in the biosynthesis of the cell wall peptidoglycan: transfers peptidoglycan precursor phospho-MurNAc-pentapeptide from UDP-MurNAc-pentapeptide onto the lipid carrier undecaprenyl phosphate, yielding undecaprenyl-pyrophosphoryl-MurNAc-pentapeptide, known as lipid I. The chain is Phospho-N-acetylmuramoyl-pentapeptide-transferase from Shouchella clausii (strain KSM-K16) (Alkalihalobacillus clausii).